Here is a 444-residue protein sequence, read N- to C-terminus: Multidrug resistance protein MdtA (444 aa).

Positions 1-20 (MKSQSKRTSRLFVFVGVVVA) are cleaved as a signal peptide. Polar residues predominate over residues 37-52 (NNTSGAQQSARGQDTS). 2 disordered regions span residues 37–60 (NNTSGAQQSARGQDTSHGGRRNTP) and 399–444 (PRSA…AEKS). Residues 409–419 (ASAEKAAAEAE) show a composition bias toward low complexity. The span at 435-444 (ARSTTAAEKS) shows a compositional bias: polar residues.

It belongs to the membrane fusion protein (MFP) (TC 8.A.1) family. In terms of assembly, part of a tripartite efflux system composed of MdtA, MdtB and MdtC.

It localises to the cell inner membrane. This is Multidrug resistance protein MdtA from Yersinia pseudotuberculosis serotype I (strain IP32953).